The following is a 63-amino-acid chain: ATPase inhibitor, mitochondrial (63 aa).

Positions 1-23 (TAGATGATRQDGSTDAFEKREKA) are disordered. Positions 18-62 (EKREKAQEDLYIRQHEKEQLEALKESLKKQKKSLDDLEBKIDDLT) form a coiled coil.

It belongs to the ATPase inhibitor family.

Its subcellular location is the mitochondrion. Its function is as follows. This protein forms a one-to-one complex with ATPase to inhibit the enzyme activity completely. This Cyberlindnera jadinii (Torula yeast) protein is ATPase inhibitor, mitochondrial.